A 104-amino-acid chain; its full sequence is Large ribosomal subunit protein uL24 (104 aa).

Belongs to the universal ribosomal protein uL24 family. As to quaternary structure, part of the 50S ribosomal subunit.

Its function is as follows. One of two assembly initiator proteins, it binds directly to the 5'-end of the 23S rRNA, where it nucleates assembly of the 50S subunit. One of the proteins that surrounds the polypeptide exit tunnel on the outside of the subunit. The sequence is that of Large ribosomal subunit protein uL24 from Pseudomonas syringae pv. syringae (strain B728a).